Consider the following 265-residue polypeptide: MAEEYKNNVPEHETPTVATEESPATTTEVTDRGLFDFLGKKEEEVKPQETTTLESEFDHKAQISEPELAAEHEEVKENKITLLEELQEKTEEDEENKPSVIEKLHRSNSSSSSSSDEEGEEKKEKKKKIVEGEEDKKGLVEKIKEKLPGHHDKTAEDDVPVSTTIPVPVSESVVEHDHPEEEKKGLVEKIKEKLPGHHDEKAEDSPAVTSTPLVVTEHPVEPTTELPVEHPEEKKGILEKIKEKLPGYHAKTTEEEVKKEKESDD.

A compositionally biased stretch (basic and acidic residues) spans 1 to 14; it reads MAEEYKNNVPEHET. Residues 1–265 are disordered; it reads MAEEYKNNVP…EVKKEKESDD (265 aa). The residue at position 2 (alanine 2) is an N-acetylalanine. A compositionally biased stretch (polar residues) spans 16-28; the sequence is TVATEESPATTTE. Residues 29–47 show a composition bias toward basic and acidic residues; that stretch reads VTDRGLFDFLGKKEEEVKP. Serine 64 is subject to Phosphoserine. A compositionally biased stretch (basic and acidic residues) spans 69 to 79; the sequence is AAEHEEVKENK. Phosphothreonine is present on threonine 90. Composition is skewed to basic and acidic residues over residues 96 to 105 and 129 to 156; these read NKPSVIEKLH and IVEGEEDKKGLVEKIKEKLPGHHDKTAE. Repeat unit 1 spans residues 133-153; that stretch reads EEDKKGLVEKIKEKLPGHHDK. A 3 X 21 AA repeats, Lys-rich region spans residues 133 to 251; it reads EEDKKGLVEK…KEKLPGYHAK (119 aa). The segment covering 160 to 172 has biased composition (low complexity); sequence PVSTTIPVPVSES. 2 stretches are compositionally biased toward basic and acidic residues: residues 173 to 204 and 227 to 265; these read VVEHDHPEEEKKGLVEKIKEKLPGHHDEKAED and PVEHPEEKKGILEKIKEKLPGYHAKTTEEEVKKEKESDD. A run of 2 repeats spans residues 180 to 200 and 231 to 251.

This sequence belongs to the plant dehydrin family.

This is Dehydrin COR47 (COR47) from Arabidopsis thaliana (Mouse-ear cress).